The chain runs to 441 residues: Proline--tRNA ligase (441 aa).

Belongs to the class-II aminoacyl-tRNA synthetase family. ProS type 2 subfamily. Homodimer.

It localises to the cytoplasm. It carries out the reaction tRNA(Pro) + L-proline + ATP = L-prolyl-tRNA(Pro) + AMP + diphosphate. Catalyzes the attachment of proline to tRNA(Pro) in a two-step reaction: proline is first activated by ATP to form Pro-AMP and then transferred to the acceptor end of tRNA(Pro). The polypeptide is Proline--tRNA ligase (Bartonella quintana (strain Toulouse) (Rochalimaea quintana)).